The chain runs to 185 residues: MKTAQELRSGNVIMVGADALVVQKAEYNKSGRNSAVVKMKLKNLLTGAPSESVYKADDKFEVVQLDKKEVTYSYFADPMYVFMDADYEQYEVEAENMTDALKYLEDGLQCEVVFYNGKAISVDLPNSVVREVIYTEPAVKGDTSGKVMKPAKIASGFELPVPAFVEIGDKIEIDTRTDEYKNRVK.

The protein belongs to the elongation factor P family.

It localises to the cytoplasm. The protein operates within protein biosynthesis; polypeptide chain elongation. Involved in peptide bond synthesis. Stimulates efficient translation and peptide-bond synthesis on native or reconstituted 70S ribosomes in vitro. Probably functions indirectly by altering the affinity of the ribosome for aminoacyl-tRNA, thus increasing their reactivity as acceptors for peptidyl transferase. The sequence is that of Elongation factor P from Aromatoleum aromaticum (strain DSM 19018 / LMG 30748 / EbN1) (Azoarcus sp. (strain EbN1)).